Consider the following 648-residue polypeptide: NAD(P)H-quinone oxidoreductase subunit 5, chloroplastic (648 aa).

16 helical membrane passes run 7 to 27 (AIWL…IGLL), 39 to 59 (LHGA…LGVL), 89 to 109 (VDPL…LVMI), 124 to 144 (FFVY…SPNL), 147 to 167 (VYGF…FWFT), 189 to 209 (LLLG…ASIA), 215 to 235 (LLIA…LVFM), 258 to 278 (TPIS…FLVA), 289 to 309 (LVME…ATMA), 327 to 347 (LGYM…FHLT), 354 to 374 (ALLF…VGFS), 395 to 415 (AMTF…ACFW), 432 to 452 (WLIA…IYFL), 472 to 492 (LGMV…GSLG), 518 to 538 (LAEF…GISL), and 625 to 645 (FYIL…TTHL).

This sequence belongs to the complex I subunit 5 family. As to quaternary structure, NDH is composed of at least 16 different subunits, 5 of which are encoded in the nucleus.

The protein localises to the plastid. It is found in the chloroplast thylakoid membrane. It carries out the reaction a plastoquinone + NADH + (n+1) H(+)(in) = a plastoquinol + NAD(+) + n H(+)(out). It catalyses the reaction a plastoquinone + NADPH + (n+1) H(+)(in) = a plastoquinol + NADP(+) + n H(+)(out). Functionally, NDH shuttles electrons from NAD(P)H:plastoquinone, via FMN and iron-sulfur (Fe-S) centers, to quinones in the photosynthetic chain and possibly in a chloroplast respiratory chain. The immediate electron acceptor for the enzyme in this species is believed to be plastoquinone. Couples the redox reaction to proton translocation, and thus conserves the redox energy in a proton gradient. This chain is NAD(P)H-quinone oxidoreductase subunit 5, chloroplastic (ndhF), found in Nephroselmis olivacea (Green alga).